The sequence spans 492 residues: 2,3-bisphosphoglycerate-independent phosphoglycerate mutase (492 aa).

The Mn(2+) site is built by aspartate 11 and serine 61. Serine 61 serves as the catalytic Phosphoserine intermediate. Residues histidine 118, 147–148 (RD), arginine 178, arginine 184, 248–251 (RNDR), and lysine 320 contribute to the substrate site. Mn(2+)-binding residues include aspartate 386, histidine 390, aspartate 427, histidine 428, and histidine 445.

Belongs to the BPG-independent phosphoglycerate mutase family. Monomer. It depends on Mn(2+) as a cofactor.

It carries out the reaction (2R)-2-phosphoglycerate = (2R)-3-phosphoglycerate. It participates in carbohydrate degradation; glycolysis; pyruvate from D-glyceraldehyde 3-phosphate: step 3/5. Functionally, catalyzes the interconversion of 2-phosphoglycerate and 3-phosphoglycerate. In Campylobacter jejuni subsp. jejuni serotype O:6 (strain 81116 / NCTC 11828), this protein is 2,3-bisphosphoglycerate-independent phosphoglycerate mutase.